The following is a 503-amino-acid chain: Dihydropyrimidinase (503 aa).

Zn(2+) is bound by residues H66, H68, and K158. N6-carboxylysine is present on K158. Y163 lines the substrate pocket. 3 residues coordinate Zn(2+): H191, H247, and D325. N346 contributes to the substrate binding site.

It belongs to the metallo-dependent hydrolases superfamily. Hydantoinase/dihydropyrimidinase family. In terms of assembly, homotetramer. Requires Zn(2+) as cofactor. Post-translationally, carboxylation allows a single lysine to coordinate two zinc ions.

It carries out the reaction 5,6-dihydrouracil + H2O = 3-(carbamoylamino)propanoate + H(+). In terms of biological role, catalyzes the second step of the reductive pyrimidine degradation, the reversible hydrolytic ring opening of dihydropyrimidines. Can catalyze the ring opening of 5,6-dihydrouracil to N-carbamyl-alanine and of 5,6-dihydrothymine to N-carbamyl-amino isobutyrate. This Dictyostelium discoideum (Social amoeba) protein is Dihydropyrimidinase (pyd2).